The sequence spans 508 residues: MILVLDFGSQYTQLIARRLRESGIYTEIVPFFESIENIQKKAPKGLILSGGPASVYAKDAYKPNGKIFDLNVPILGICYGMQYLVDFFGGVVVGANEQEFGKAVLEITQDSVIFEGVKIKSLVWMSHMDKVIELPKGFTTLAKSPNSPHCAIENGKIFGLQFHPEVIQSEEGGKILENFALLVCGCEKTWGMQHFAQREIARLKEKIANAKVLCAVSGGVDSTVVATLLYRAIKDNLIAVFVDHGLLRKNEKERVQAMFKDLQIPLNTIDAKGIFLSKLKGVSEPELKRKIIGETFIEVFEKEAKKHHLKGKIEFLAQGTLYPDVIESVSVKGPSKVIKTHHNVGGLPEWMDFKLIEPLRELFKDEARLLGKELGVSQDFLMRHPFPGPGLAVRILGEVSESKIKRLQEADFIFIEELKKANLYDKVWQAFCVLLNVNSVGVMGDNRTYENAICLRAVNASDGMTASFSFLEHSFLEKVSNRITNEVSGINRVVYDITSKPPGTIEWE.

One can recognise a Glutamine amidotransferase type-1 domain in the interval Met-1 to Thr-189. The active-site Nucleophile is Cys-78. Active-site residues include His-163 and Glu-165. The region spanning Trp-190 to Arg-383 is the GMPS ATP-PPase domain. Ser-217–Thr-223 serves as a coordination point for ATP.

Homodimer.

The enzyme catalyses XMP + L-glutamine + ATP + H2O = GMP + L-glutamate + AMP + diphosphate + 2 H(+). It participates in purine metabolism; GMP biosynthesis; GMP from XMP (L-Gln route): step 1/1. In terms of biological role, catalyzes the synthesis of GMP from XMP. In Helicobacter pylori (strain P12), this protein is GMP synthase [glutamine-hydrolyzing].